Consider the following 236-residue polypeptide: MEIIPAIDLKQSKAVRLTKGDMQTAKIYSDKPWELAKEFEDLGAKWLHIVDLDGAFAGDAINLKTIEKIVSTTNLQVEVGGGIRTKERIKSYLNSGVSRIILGSIALKNPEFVKEVAKNYRVVVGIDAIDGFVAIEGWANVSKMQASNLAKLYADAGVEAIIATDISRDGMLNGVNVEFSASIAKASGIDTIASGGVKDINDIKCLKLNGNIAGVIVGKAYYEGKLDLKEAFKSNF.

D8 acts as the Proton acceptor in catalysis. The active-site Proton donor is D127.

Belongs to the HisA/HisF family.

The protein localises to the cytoplasm. The enzyme catalyses 1-(5-phospho-beta-D-ribosyl)-5-[(5-phospho-beta-D-ribosylamino)methylideneamino]imidazole-4-carboxamide = 5-[(5-phospho-1-deoxy-D-ribulos-1-ylimino)methylamino]-1-(5-phospho-beta-D-ribosyl)imidazole-4-carboxamide. Its pathway is amino-acid biosynthesis; L-histidine biosynthesis; L-histidine from 5-phospho-alpha-D-ribose 1-diphosphate: step 4/9. The polypeptide is 1-(5-phosphoribosyl)-5-[(5-phosphoribosylamino)methylideneamino] imidazole-4-carboxamide isomerase (Campylobacter fetus subsp. fetus (strain 82-40)).